The chain runs to 278 residues: Pantothenate synthetase (278 aa).

30–37 is a binding site for ATP; that stretch reads MGFLHEGH. Histidine 37 serves as the catalytic Proton donor. Glutamine 61 contacts (R)-pantoate. Position 61 (glutamine 61) interacts with beta-alanine. 147–150 is an ATP binding site; that stretch reads GQKD. Glutamine 153 provides a ligand contact to (R)-pantoate. Residues valine 176 and 184-187 each bind ATP; that span reads LSSR.

This sequence belongs to the pantothenate synthetase family. As to quaternary structure, homodimer.

It is found in the cytoplasm. It catalyses the reaction (R)-pantoate + beta-alanine + ATP = (R)-pantothenate + AMP + diphosphate + H(+). The protein operates within cofactor biosynthesis; (R)-pantothenate biosynthesis; (R)-pantothenate from (R)-pantoate and beta-alanine: step 1/1. Functionally, catalyzes the condensation of pantoate with beta-alanine in an ATP-dependent reaction via a pantoyl-adenylate intermediate. The protein is Pantothenate synthetase of Thermosipho africanus (strain TCF52B).